The sequence spans 216 residues: Orotate phosphoribosyltransferase (216 aa).

K30 lines the 5-phospho-alpha-D-ribose 1-diphosphate pocket. Residue 38 to 39 coordinates orotate; that stretch reads FF. 5-phospho-alpha-D-ribose 1-diphosphate contacts are provided by residues 75 to 76, R102, K103, K106, H108, and 128 to 136; these read YK and DDVITAGTA. Residues T132 and R160 each coordinate orotate.

This sequence belongs to the purine/pyrimidine phosphoribosyltransferase family. PyrE subfamily. As to quaternary structure, homodimer. It depends on Mg(2+) as a cofactor.

The catalysed reaction is orotidine 5'-phosphate + diphosphate = orotate + 5-phospho-alpha-D-ribose 1-diphosphate. Its pathway is pyrimidine metabolism; UMP biosynthesis via de novo pathway; UMP from orotate: step 1/2. Functionally, catalyzes the transfer of a ribosyl phosphate group from 5-phosphoribose 1-diphosphate to orotate, leading to the formation of orotidine monophosphate (OMP). The polypeptide is Orotate phosphoribosyltransferase (Acinetobacter baumannii (strain ACICU)).